Consider the following 927-residue polypeptide: E3 ubiquitin-protein ligase HOS1 (927 aa).

The RING-type; degenerate zinc-finger motif lies at 53-93 (CRATRDLASCGRFVNYVLNPCGHASLCTECCQRCDVCPICR). 3 disordered regions span residues 678-699 (SGQF…LPDA), 782-806 (FKDL…SPEV), and 832-927 (VKSS…FAAR). The span at 797 to 806 (KRTEESSPEV) shows a compositional bias: basic and acidic residues. Composition is skewed to polar residues over residues 832-851 (VKSS…STFF) and 878-892 (NNNN…NNSG). Positions 917–927 (KGRRRRRFAAR) are enriched in basic residues.

As to quaternary structure, interacts with SCRM/ICE1, FLK and MSI4/FVE. As to expression, ubiquitously expressed with higher levels in leaf vasculature, roots and root tips.

It is found in the nucleus. It localises to the cytoplasm. It carries out the reaction S-ubiquitinyl-[E2 ubiquitin-conjugating enzyme]-L-cysteine + [acceptor protein]-L-lysine = [E2 ubiquitin-conjugating enzyme]-L-cysteine + N(6)-ubiquitinyl-[acceptor protein]-L-lysine.. The protein operates within protein modification; protein ubiquitination. E3 ubiquitin-protein ligase that mediates ubiquitination and subsequent proteasomal degradation of the transcription factor ICE1. Acts as a negative regulator of cold signaling pathways. Probably involved in recruiting the NUP107-160 subcomplex of the nuclear pore complex to chromatin. Controls flowering time in response to ambient temperatures (16 and 23 degrees Celsius) and intermittent cold, probably via the regulation of FT and TSF levels. In Arabidopsis thaliana (Mouse-ear cress), this protein is E3 ubiquitin-protein ligase HOS1 (HOS1).